Here is a 172-residue protein sequence, read N- to C-terminus: Large ribosomal subunit protein uL22y (172 aa).

This sequence belongs to the universal ribosomal protein uL22 family.

The sequence is that of Large ribosomal subunit protein uL22y from Hordeum vulgare (Barley).